A 295-amino-acid chain; its full sequence is Malonyl-[acyl-carrier protein] O-methyltransferase (295 aa).

This sequence belongs to the methyltransferase superfamily.

The enzyme catalyses malonyl-[ACP] + S-adenosyl-L-methionine = malonyl-[ACP] methyl ester + S-adenosyl-L-homocysteine. Its pathway is cofactor biosynthesis; biotin biosynthesis. Its function is as follows. Converts the free carboxyl group of a malonyl-thioester to its methyl ester by transfer of a methyl group from S-adenosyl-L-methionine (SAM). It allows to synthesize pimeloyl-ACP via the fatty acid synthetic pathway. The sequence is that of Malonyl-[acyl-carrier protein] O-methyltransferase from Halorhodospira halophila (strain DSM 244 / SL1) (Ectothiorhodospira halophila (strain DSM 244 / SL1)).